Consider the following 73-residue polypeptide: Salivary thrombin inhibitor XC-42 (73 aa).

The signal sequence occupies residues 1–23; that stretch reads MKLQFLFIFIAFCVMLFAQIATA.

Interacts with human F2 (thrombin). As to expression, salivary gland (at protein level).

Its subcellular location is the secreted. Functionally, acts as a competitive inhibitor of host thrombin. The protein is Salivary thrombin inhibitor XC-42 of Xenopsylla cheopis (Oriental rat flea).